Reading from the N-terminus, the 110-residue chain is MRFMTLLFLTALAGALVCAYDPEAASAPGSGNPCHEASAAQKENAGEDPGLARQAPKPRKQRSSLLEKGLDGAKKAVGGLGKLGKDAVEDLESVGKGAVHDVKDVLDSVL.

An N-terminal signal peptide occupies residues 1-19 (MRFMTLLFLTALAGALVCA). A disordered region spans residues 24–70 (AASAPGSGNPCHEASAAQKENAGEDPGLARQAPKPRKQRSSLLEKGL). S30 and S38 each carry an O-linked (Xyl...) (chondroitin sulfate) serine glycan. Positions 50–62 (GLARQAPKPRKQR) are excised as a propeptide. A helical transmembrane segment spans residues 64–108 (SLLEKGLDGAKKAVGGLGKLGKDAVEDLESVGKGAVHDVKDVLDS). Position 67 (E67) interacts with Zn(2+). The residue at position 68 (K68) is an N6-acetyllysine. Zn(2+) is bound by residues D71, D86, D90, H100, and D104. L110 is a propeptide.

As to quaternary structure, homohexamer. Requires Mn(2+) as cofactor. Zn(2+) is required as a cofactor. Detected in urine (at protein level). Constitutively expressed in eccrine sweat gland cells (at protein level). Secreted into the sweat at a concentration of 1-10 micrograms/ml.

It localises to the secreted. It is found in the membrane. Functionally, found in sweat, has an antimicrobial activity during early bacterial colonization. The secreted peptide assembles into homohexameric complexes that can associate with and also insert into pathogen membranes. Once inserted in bacteria membranes forms anion channels probably altering the transmembrane potential essential for bacterial survival. Highly effective against E.coli, E.faecalis, S.aureus and C.albicans. Optimal pH and salt concentration resemble the conditions in sweat. Also exhibits proteolytic activity, cleaving on the C-terminal side of Arg and, to a lesser extent, Lys residues. Promotes survival of neurons and displays phosphatase activity. It may bind IgG. This Homo sapiens (Human) protein is Dermcidin.